Reading from the N-terminus, the 62-residue chain is Sperm protamine P1 (62 aa).

The interval 1–62 (MARYRHSRSR…RYSRRRRRRY (62 aa)) is disordered.

It belongs to the protamine P1 family. In terms of tissue distribution, testis.

The protein localises to the nucleus. It localises to the chromosome. Protamines substitute for histones in the chromatin of sperm during the haploid phase of spermatogenesis. They compact sperm DNA into a highly condensed, stable and inactive complex. The polypeptide is Sperm protamine P1 (PRM1) (Wallabia bicolor (Swamp wallaby)).